Consider the following 106-residue polypeptide: uncharacterized protein (106 aa).

This is an uncharacterized protein from Schizosaccharomyces pombe (strain 972 / ATCC 24843) (Fission yeast).